The chain runs to 124 residues: Large ribosomal subunit protein bL12 (124 aa).

It belongs to the bacterial ribosomal protein bL12 family. As to quaternary structure, homodimer. Part of the ribosomal stalk of the 50S ribosomal subunit. Forms a multimeric L10(L12)X complex, where L10 forms an elongated spine to which 2 to 4 L12 dimers bind in a sequential fashion. Binds GTP-bound translation factors.

In terms of biological role, forms part of the ribosomal stalk which helps the ribosome interact with GTP-bound translation factors. Is thus essential for accurate translation. The protein is Large ribosomal subunit protein bL12 of Akkermansia muciniphila (strain ATCC BAA-835 / DSM 22959 / JCM 33894 / BCRC 81048 / CCUG 64013 / CIP 107961 / Muc).